Here is a 696-residue protein sequence, read N- to C-terminus: C2 domain-containing protein 2 (696 aa).

Residues 8–28 (VQWLFLVSLFVAALGTVGLYL) traverse the membrane as a helical segment. The SMP-LBD domain occupies 45–238 (EPDELRRRES…PTQVKEAQSL (194 aa)). At serine 54 the chain carries Phosphoserine. One can recognise a C2 domain in the interval 241–357 (PSSTAQEPCP…RKQPNGPQTF (117 aa)). Serine 436 is modified (phosphoserine). Position 440 is a phosphothreonine (threonine 440). The disordered stretch occupies residues 551-611 (ATEASATTPP…DGDELSESSL (61 aa)). Basic and acidic residues predominate over residues 573-588 (KPRENDLDSWELEKES). Phosphoserine is present on serine 581.

The protein localises to the membrane. This Mus musculus (Mouse) protein is C2 domain-containing protein 2.